We begin with the raw amino-acid sequence, 23 residues long: Pseudin-3 (23 aa).

As to expression, expressed by the skin glands.

Its subcellular location is the secreted. Possesses antifungal activity against C.albicans and is also active against E.coli and S.aureus. This is Pseudin-3 from Pseudis paradoxa (Paradoxical frog).